The sequence spans 353 residues: Photosystem II D2 protein (353 aa).

At Thr-2 the chain carries N-acetylthreonine. Thr-2 bears the Phosphothreonine mark. The chain crosses the membrane as a helical span at residues 41–61 (CAYFALGGWFTGTTFVTSWYT). Residue His-118 participates in chlorophyll a binding. Residues 125-141 (GFMLRQFELARSVQLRP) traverse the membrane as a helical segment. The pheophytin a site is built by Gln-130 and Asn-143. A helical membrane pass occupies residues 153–166 (VFVSVFLIYPLGQS). Position 198 (His-198) interacts with chlorophyll a. A helical transmembrane segment spans residues 208 to 228 (AALLCAIHGATVENTLFEDGD). A plastoquinone contacts are provided by His-215 and Phe-262. His-215 is a binding site for Fe cation. Fe cation is bound at residue His-269. A helical transmembrane segment spans residues 279 to 295 (GLWMSAIGVVGLALNLR).

This sequence belongs to the reaction center PufL/M/PsbA/D family. As to quaternary structure, PSII is composed of 1 copy each of membrane proteins PsbA, PsbB, PsbC, PsbD, PsbE, PsbF, PsbH, PsbI, PsbJ, PsbK, PsbL, PsbM, PsbT, PsbX, PsbY, PsbZ, Psb30/Ycf12, at least 3 peripheral proteins of the oxygen-evolving complex and a large number of cofactors. It forms dimeric complexes. The cofactor is The D1/D2 heterodimer binds P680, chlorophylls that are the primary electron donor of PSII, and subsequent electron acceptors. It shares a non-heme iron and each subunit binds pheophytin, quinone, additional chlorophylls, carotenoids and lipids. There is also a Cl(-1) ion associated with D1 and D2, which is required for oxygen evolution. The PSII complex binds additional chlorophylls, carotenoids and specific lipids..

It localises to the plastid. It is found in the chloroplast thylakoid membrane. It carries out the reaction 2 a plastoquinone + 4 hnu + 2 H2O = 2 a plastoquinol + O2. In terms of biological role, photosystem II (PSII) is a light-driven water:plastoquinone oxidoreductase that uses light energy to abstract electrons from H(2)O, generating O(2) and a proton gradient subsequently used for ATP formation. It consists of a core antenna complex that captures photons, and an electron transfer chain that converts photonic excitation into a charge separation. The D1/D2 (PsbA/PsbD) reaction center heterodimer binds P680, the primary electron donor of PSII as well as several subsequent electron acceptors. D2 is needed for assembly of a stable PSII complex. This Oryza nivara (Indian wild rice) protein is Photosystem II D2 protein.